Reading from the N-terminus, the 304-residue chain is DCN1-like protein 3 (304 aa).

Disordered stretches follow at residues 1 to 86 and 284 to 304; these read MGQC…AEES and EGEGRGALSSGPEGLCPEEQT. A lipid anchor (N-myristoyl glycine) is attached at Gly2. One can recognise a DCUN1 domain in the interval 86–278; sequence SSLQRLEELF…LFDTFVEWEM (193 aa).

Part of a complex containing DCUN1D3, CUL3 and RBX1. Interacts (via the DCUN1 domain) with the unneddylated cullins: interacts with CUL1, CUL2, CUL3, CUL4A, CUL4B and CUL5; these interactions promote the cullin neddylation and the identity of the cullin dictates the affinity of the interaction. Interacts preferentially with CUL3; this interaction triggers the relocalization of CUL3 to the cell membrane where CUL3 is neddylated. Interacts (via DCUN1 domain) with RBX1. May also interact with regulators or subunits of cullin-RING ligases such as RNF7, ELOB and DDB1; these interactions are bridged by cullins. Interacts (via DCUN1 domain) with CAND1; this interaction is bridged by cullins and strongly inhibits cullin neddylation. These CAND-cullin-DCNL complexes can only be neddylated in the presence of a substrate adapter. Interacts (via DCUN1 domain) with the N-terminally acetylated form of UBE2M and UBE2F. In terms of tissue distribution, tends to be down-regulated in different type of cancers, including lung neuroendocrine carcinoma, thyroid Huerthle cell carcinoma and lung squamous cell carcinoma. Mostly expressed in testis and brain. Highly expressed in liver, bladder and renal normal tissue than their tumor tissue counterparts. Palmitoylation stabilizes DCUN1D3 at the cell membrane.

The protein resides in the cell membrane. Its subcellular location is the cytoplasm. It is found in the nucleus. The protein localises to the perinuclear region. In terms of biological role, contributes to the neddylation of all cullins by transferring NEDD8 from N-terminally acetylated NEDD8-conjugating E2s enzyme to different cullin C-terminal domain-RBX complexes and may play a role in the cell cycle progression by regulating the SCF ubiquitin E3 ligase complex, after UV damage. At the cell membrane, can promote and as well inhibit cullins neddylation. This Homo sapiens (Human) protein is DCN1-like protein 3.